The following is a 485-amino-acid chain: Zinc finger protein 639 (485 aa).

The segment covering 1 to 14 (MNEYPKKRKRKTLH) has biased composition (basic residues). Residues 1–20 (MNEYPKKRKRKTLHPSRYSD) are disordered. Ser-60 carries the phosphoserine modification. Lys-76 is covalently cross-linked (Glycyl lysine isopeptide (Lys-Gly) (interchain with G-Cter in SUMO2)). At Ser-88 the chain carries Phosphoserine. Glycyl lysine isopeptide (Lys-Gly) (interchain with G-Cter in SUMO2) cross-links involve residues Lys-177, Lys-181, and Lys-226. 8 C2H2-type zinc fingers span residues 204-227 (YKCELCEFNSKYFSDLKQHMILKH), 233-255 (NVCRVCKESFSTNMLLIEHAKLH), 260-283 (YICKYCDYKTVIFENLSQHIADTH), 289-311 (YWCEQCDVQFSSSSELYLHFQEH), 374-397 (FVCQVCGFRSRLHTNVNRHVAIEH), 403-425 (HVCDDCGKGFSSMLEYCKHLNSH), 431-454 (YLCQYCEYSTGQIEDLKIHLDFKH), and 460-482 (HKCSDCLMRFGNERELISHLPVH). Residues 371-455 (KNFFVCQVCG…LKIHLDFKHS (85 aa)) are interaction with CTNNA2.

This sequence belongs to the krueppel C2H2-type zinc-finger protein family. In terms of assembly, interacts with CTNNA2.

It localises to the nucleus. Binds DNA and may function as a transcriptional repressor. The protein is Zinc finger protein 639 (ZNF639) of Homo sapiens (Human).